The sequence spans 111 residues: uncharacterized protein (111 aa).

The tract at residues 1-85 is disordered; that stretch reads MTGLMKAFQK…TSSREDEQKL (85 aa). The segment covering 11–23 has biased composition (polar residues); sequence LSPTKRQYAEITQ. A compositionally biased stretch (low complexity) spans 24–42; that stretch reads SNSSISSSSSGSKYNDSSS. The span at 56–77 shows a compositional bias: polar residues; the sequence is ARASTSTQAQKPASSQQKGGTS.

This is an uncharacterized protein from Microplitis demolitor (Parasitoid wasp).